An 810-amino-acid chain; its full sequence is Plasminogen (810 aa).

The N-terminal stretch at 1–19 is a signal peptide; the sequence is MEHKEVVLLLLLFLKSGQG. The 79-residue stretch at 20–98 folds into the PAN domain; it reads EPLDDYVNTQ…RDVVLFEKKV (79 aa). 12 cysteine pairs are disulfide-bonded: C49–C73, C53–C61, C103–C181, C124–C164, C152–C176, C185–C262, C188–C316, C206–C245, C234–C257, C275–C352, C296–C335, and C324–C347. 3 consecutive Kringle domains span residues 103–181, 184–262, and 275–352; these read CKTG…IPEC, ACMH…IPRC, and CLKG…IPSC. The interval 126-145 is disordered; that stretch reads KWSSTSPHRPRFSPATHPSE. L-lysine-binding residues include R136, D158, and R172. T365 carries an O-linked (GalNAc...) threonine glycan. Intrachain disulfides connect C377–C454, C398–C437, C426–C449, C481–C560, C502–C543, C531–C555, C567–C685, C577–C585, and C607–C623. Kringle domains are found at residues 377–454 and 481–560; these read CYHG…LKKC and CMFG…VPQC. Residues D432 and R445 each contribute to the L-lysine site. Positions 581-808 constitute a Peptidase S1 domain; that stretch reads VVGGCVANAH…FVTWIEGVMR (228 aa). S597 is modified (phosphoserine). Catalysis depends on charge relay system residues H622 and D665. Position 688 is a phosphoserine (S688). 3 disulfides stabilise this stretch: C699-C766, C729-C745, and C756-C784. S760 functions as the Charge relay system in the catalytic mechanism.

It belongs to the peptidase S1 family. Plasminogen subfamily. In terms of assembly, interacts with CSPG4 and AMOT. Interacts (via the Kringle domains) with HRG; the interaction tethers PLG to the cell surface and enhances its activation. Interacts (via Kringle 4 domain) with ADA; the interaction stimulates PLG activation when in complex with DPP4. Angiostatin: Interacts with ATP5F1A; the interaction inhibits most of the angiogenic effects of angiostatin. In the presence of the inhibitor, the activation involves only cleavage after Arg-580, yielding two chains held together by two disulfide bonds. In the absence of the inhibitor, the activation involves additionally the removal of the activation peptide.

It is found in the secreted. It catalyses the reaction Preferential cleavage: Lys-|-Xaa &gt; Arg-|-Xaa, higher selectivity than trypsin. Converts fibrin into soluble products.. Its activity is regulated as follows. Converted into plasmin by plasminogen activators, both plasminogen and its activator being bound to fibrin. Activated with catalytic amounts of streptokinase. In terms of biological role, plasmin dissolves the fibrin of blood clots and acts as a proteolytic factor in a variety of other processes including embryonic development, tissue remodeling, tumor invasion, and inflammation. In ovulation, weakens the walls of the Graafian follicle. It activates the urokinase-type plasminogen activator, collagenases and several complement zymogens, such as C1, C4 and C5. Cleavage of fibronectin and laminin leads to cell detachment and apoptosis. Also cleaves fibrin, thrombospondin and von Willebrand factor. Its role in tissue remodeling and tumor invasion may be modulated by CSPG4. Binds to cells. The sequence is that of Plasminogen (PLG) from Pongo abelii (Sumatran orangutan).